We begin with the raw amino-acid sequence, 293 residues long: Nucleotide-binding protein BA_5384/GBAA_5384/BAS5004 (293 aa).

14-21 is an ATP binding site; sequence GMSGAGKT. 65–68 contacts GTP; sequence DLRG.

The protein belongs to the RapZ-like family.

In terms of biological role, displays ATPase and GTPase activities. This is Nucleotide-binding protein BA_5384/GBAA_5384/BAS5004 from Bacillus anthracis.